Here is a 396-residue protein sequence, read N- to C-terminus: Putative cystathionine beta-lyase (396 aa).

Lys-210 bears the N6-(pyridoxal phosphate)lysine mark.

This sequence belongs to the trans-sulfuration enzymes family. The cofactor is pyridoxal 5'-phosphate.

The catalysed reaction is L,L-cystathionine + H2O = L-homocysteine + pyruvate + NH4(+). It carries out the reaction an S-substituted L-cysteine + H2O = a thiol + pyruvate + NH4(+). It participates in amino-acid biosynthesis; L-methionine biosynthesis via de novo pathway; L-homocysteine from L-cystathionine: step 1/1. Catalyzes the cleavage of cystathionine to homocysteine, pyruvate and ammonia during methionine biosynthesis. The polypeptide is Putative cystathionine beta-lyase (metC) (Rhizobium johnstonii (strain DSM 114642 / LMG 32736 / 3841) (Rhizobium leguminosarum bv. viciae)).